The chain runs to 60 residues: Mastoparan-VT5 (60 aa).

A signal peptide spans 1-27; that stretch reads MKNTILILFTAFIALLGFFGMIAEPLA. AXPX repeat units follow at residues 27–30, 31–34, 37–40, and 41–44; these read ADPL, ADPD, and ADPE. A propeptide spanning residues 28 to 45 is cleaved from the precursor; the sequence is DPLADPLPDADPDADPET.

It belongs to the MCD family. Mastoparan subfamily. Expressed by the venom gland.

It localises to the secreted. Functionally, the synthetic peptide shows weak antimicrobial activities against a few Gram-positive bacteria (only 2 on the 11 strains tested) and the fungus C.albicans. Does not show activity against all the Gram-negative bacteria tested. Exhibits little hemolytic activity against washed human erythrocytes. The chain is Mastoparan-VT5 from Vespa tropica (Greater banded hornet).